Reading from the N-terminus, the 119-residue chain is Holo-[acyl-carrier-protein] synthase (119 aa).

Mg(2+) contacts are provided by Asp-7 and Glu-53.

Belongs to the P-Pant transferase superfamily. AcpS family. It depends on Mg(2+) as a cofactor.

Its subcellular location is the cytoplasm. It carries out the reaction apo-[ACP] + CoA = holo-[ACP] + adenosine 3',5'-bisphosphate + H(+). In terms of biological role, transfers the 4'-phosphopantetheine moiety from coenzyme A to a Ser of acyl-carrier-protein. This is Holo-[acyl-carrier-protein] synthase from Dehalococcoides mccartyi (strain CBDB1).